The primary structure comprises 151 residues: MKQEIIEKVKEMLQPLLEERGLKLVDIEYVTEGKPVLRIYIYNPEGTTIEDCEWISRRIGALLDIEDLIPVSYTLEVSSPGLERKLKNVEEYDIFKGRDIKIVLKEPVDKKNVIKGVLKGREDNNIIVEEEGEEVRIPLENIARANLEFKH.

This sequence belongs to the RimP family.

The protein resides in the cytoplasm. In terms of biological role, required for maturation of 30S ribosomal subunits. This chain is Ribosome maturation factor RimP, found in Persephonella marina (strain DSM 14350 / EX-H1).